Reading from the N-terminus, the 225-residue chain is Phosphoribosylformylglycinamidine synthase subunit PurQ (225 aa).

The Glutamine amidotransferase type-1 domain occupies 5–225 (SAVITFPGSN…ESVVRGLVEA (221 aa)). Residue Cys89 is the Nucleophile of the active site. Catalysis depends on residues His197 and Glu199.

In terms of assembly, part of the FGAM synthase complex composed of 1 PurL, 1 PurQ and 2 PurS subunits.

The protein localises to the cytoplasm. The enzyme catalyses N(2)-formyl-N(1)-(5-phospho-beta-D-ribosyl)glycinamide + L-glutamine + ATP + H2O = 2-formamido-N(1)-(5-O-phospho-beta-D-ribosyl)acetamidine + L-glutamate + ADP + phosphate + H(+). The catalysed reaction is L-glutamine + H2O = L-glutamate + NH4(+). It participates in purine metabolism; IMP biosynthesis via de novo pathway; 5-amino-1-(5-phospho-D-ribosyl)imidazole from N(2)-formyl-N(1)-(5-phospho-D-ribosyl)glycinamide: step 1/2. In terms of biological role, part of the phosphoribosylformylglycinamidine synthase complex involved in the purines biosynthetic pathway. Catalyzes the ATP-dependent conversion of formylglycinamide ribonucleotide (FGAR) and glutamine to yield formylglycinamidine ribonucleotide (FGAM) and glutamate. The FGAM synthase complex is composed of three subunits. PurQ produces an ammonia molecule by converting glutamine to glutamate. PurL transfers the ammonia molecule to FGAR to form FGAM in an ATP-dependent manner. PurS interacts with PurQ and PurL and is thought to assist in the transfer of the ammonia molecule from PurQ to PurL. This Novosphingobium aromaticivorans (strain ATCC 700278 / DSM 12444 / CCUG 56034 / CIP 105152 / NBRC 16084 / F199) protein is Phosphoribosylformylglycinamidine synthase subunit PurQ.